The chain runs to 437 residues: 3-phosphoshikimate 1-carboxyvinyltransferase (437 aa).

Residues Lys28, Ser29, and Arg33 each coordinate 3-phosphoshikimate. Lys28 lines the phosphoenolpyruvate pocket. Gly97 and Arg125 together coordinate phosphoenolpyruvate. Residues Ser168, Ser169, Gln170, Glu316, and His343 each coordinate 3-phosphoshikimate. Position 170 (Gln170) interacts with phosphoenolpyruvate. Catalysis depends on Glu316, which acts as the Proton acceptor. The phosphoenolpyruvate site is built by Arg347, Arg388, and Lys413.

The protein belongs to the EPSP synthase family. As to quaternary structure, monomer.

The protein resides in the cytoplasm. The enzyme catalyses 3-phosphoshikimate + phosphoenolpyruvate = 5-O-(1-carboxyvinyl)-3-phosphoshikimate + phosphate. The protein operates within metabolic intermediate biosynthesis; chorismate biosynthesis; chorismate from D-erythrose 4-phosphate and phosphoenolpyruvate: step 6/7. In terms of biological role, catalyzes the transfer of the enolpyruvyl moiety of phosphoenolpyruvate (PEP) to the 5-hydroxyl of shikimate-3-phosphate (S3P) to produce enolpyruvyl shikimate-3-phosphate and inorganic phosphate. The sequence is that of 3-phosphoshikimate 1-carboxyvinyltransferase from Rhodococcus erythropolis (strain PR4 / NBRC 100887).